The primary structure comprises 105 residues: Putative ferredoxin-3 (105 aa).

2 4Fe-4S ferredoxin-type domains span residues 17–46 (YLTAIDAMTCIGCGRCFKVCSREVMHLHGI) and 70–100 (TIMVVDHAGRCIGCGACARVCPKNCQTHVAA). Residues Cys-26, Cys-29, Cys-32, Cys-36, Cys-80, Cys-83, Cys-86, and Cys-90 each coordinate [4Fe-4S] cluster.

[4Fe-4S] cluster is required as a cofactor.

Ferredoxins are iron-sulfur proteins that transfer electrons in a wide variety of metabolic reactions. In Sinorhizobium fredii (strain NBRC 101917 / NGR234), this protein is Putative ferredoxin-3 (fdxB).